Reading from the N-terminus, the 330-residue chain is CRISPR-associated endonuclease Cas1 2 (330 aa).

Residues Glu156, His222, and Glu237 each contribute to the Mn(2+) site.

This sequence belongs to the CRISPR-associated endonuclease Cas1 family. In terms of assembly, homodimer, forms a heterotetramer with a Cas2 homodimer. Mg(2+) is required as a cofactor. The cofactor is Mn(2+).

In terms of biological role, CRISPR (clustered regularly interspaced short palindromic repeat), is an adaptive immune system that provides protection against mobile genetic elements (viruses, transposable elements and conjugative plasmids). CRISPR clusters contain spacers, sequences complementary to antecedent mobile elements, and target invading nucleic acids. CRISPR clusters are transcribed and processed into CRISPR RNA (crRNA). Acts as a dsDNA endonuclease. Involved in the integration of spacer DNA into the CRISPR cassette. The sequence is that of CRISPR-associated endonuclease Cas1 2 from Thermodesulfovibrio yellowstonii (strain ATCC 51303 / DSM 11347 / YP87).